The primary structure comprises 124 residues: Large ribosomal subunit protein uL18 (124 aa).

The protein belongs to the universal ribosomal protein uL18 family. In terms of assembly, part of the 50S ribosomal subunit; part of the 5S rRNA/L5/L18/L25 subcomplex. Contacts the 5S and 23S rRNAs.

Functionally, this is one of the proteins that bind and probably mediate the attachment of the 5S RNA into the large ribosomal subunit, where it forms part of the central protuberance. This chain is Large ribosomal subunit protein uL18, found in Orientia tsutsugamushi (strain Ikeda) (Rickettsia tsutsugamushi).